Here is a 146-residue protein sequence, read N- to C-terminus: Transcriptional regulator MraZ (146 aa).

2 consecutive SpoVT-AbrB domains span residues 4-46 and 75-118; these read TVFR…SQTE and TVKV…PEQR.

Belongs to the MraZ family. As to quaternary structure, forms oligomers.

The protein resides in the cytoplasm. Its subcellular location is the nucleoid. The polypeptide is Transcriptional regulator MraZ (Mesomycoplasma hyopneumoniae (strain 232) (Mycoplasma hyopneumoniae)).